We begin with the raw amino-acid sequence, 177 residues long: Large ribosomal subunit protein uL10 (177 aa).

It belongs to the universal ribosomal protein uL10 family. In terms of assembly, part of the ribosomal stalk of the 50S ribosomal subunit. The N-terminus interacts with L11 and the large rRNA to form the base of the stalk. The C-terminus forms an elongated spine to which L12 dimers bind in a sequential fashion forming a multimeric L10(L12)X complex.

Its function is as follows. Forms part of the ribosomal stalk, playing a central role in the interaction of the ribosome with GTP-bound translation factors. This chain is Large ribosomal subunit protein uL10, found in Leptospira interrogans serogroup Icterohaemorrhagiae serovar copenhageni (strain Fiocruz L1-130).